We begin with the raw amino-acid sequence, 294 residues long: 4-hydroxy-tetrahydrodipicolinate synthase (294 aa).

Thr45 contributes to the pyruvate binding site. The active-site Proton donor/acceptor is Tyr133. Lys161 serves as the catalytic Schiff-base intermediate with substrate. Ile203 is a binding site for pyruvate.

Belongs to the DapA family. In terms of assembly, homotetramer; dimer of dimers.

Its subcellular location is the cytoplasm. The catalysed reaction is L-aspartate 4-semialdehyde + pyruvate = (2S,4S)-4-hydroxy-2,3,4,5-tetrahydrodipicolinate + H2O + H(+). The protein operates within amino-acid biosynthesis; L-lysine biosynthesis via DAP pathway; (S)-tetrahydrodipicolinate from L-aspartate: step 3/4. In terms of biological role, catalyzes the condensation of (S)-aspartate-beta-semialdehyde [(S)-ASA] and pyruvate to 4-hydroxy-tetrahydrodipicolinate (HTPA). The polypeptide is 4-hydroxy-tetrahydrodipicolinate synthase (Shewanella sp. (strain MR-7)).